We begin with the raw amino-acid sequence, 667 residues long: Probable Na(+)/H(+) antiporter nhx-9 (667 aa).

8 helical membrane passes run V41–M61, L73–A93, S97–P117, V128–L148, I165–E185, F192–Y212, L236–A256, and I268–V288. N-linked (GlcNAc...) asparagine glycosylation occurs at N310. The next 4 helical transmembrane spans lie at M325–S345, L351–V371, F390–P410, and M418–I438. Positions T637–V667 are disordered. Position 644 is a phosphothreonine (T644).

This sequence belongs to the monovalent cation:proton antiporter 1 (CPA1) transporter (TC 2.A.36) family. In terms of processing, phosphorylated. In early stage larva, expressed in the twin excretory cell processes. At later larval stages, expression is more restricted, resulting in a 'beads on a chain' appearance.

It localises to the cell membrane. Functionally, serves some physiological function other than regulation of cellular pH. In Caenorhabditis elegans, this protein is Probable Na(+)/H(+) antiporter nhx-9 (nhx-9).